Here is a 248-residue protein sequence, read N- to C-terminus: Segregation and condensation protein A (248 aa).

Belongs to the ScpA family. Component of a cohesin-like complex composed of ScpA, ScpB and the Smc homodimer, in which ScpA and ScpB bind to the head domain of Smc. The presence of the three proteins is required for the association of the complex with DNA.

Its subcellular location is the cytoplasm. In terms of biological role, participates in chromosomal partition during cell division. May act via the formation of a condensin-like complex containing Smc and ScpB that pull DNA away from mid-cell into both cell halves. The sequence is that of Segregation and condensation protein A from Clostridium perfringens (strain SM101 / Type A).